The following is a 332-amino-acid chain: Pyrroline-5-carboxylate reductase (332 aa).

The protein belongs to the pyrroline-5-carboxylate reductase family.

It catalyses the reaction L-proline + NADP(+) = (S)-1-pyrroline-5-carboxylate + NADPH + 2 H(+). The enzyme catalyses L-proline + NAD(+) = (S)-1-pyrroline-5-carboxylate + NADH + 2 H(+). It functions in the pathway amino-acid biosynthesis; L-proline biosynthesis; L-proline from L-glutamate 5-semialdehyde: step 1/1. The chain is Pyrroline-5-carboxylate reductase (pro-1) from Neurospora crassa (strain ATCC 24698 / 74-OR23-1A / CBS 708.71 / DSM 1257 / FGSC 987).